The following is a 786-amino-acid chain: Zinc finger transcription factor YRM1 (786 aa).

The disordered stretch occupies residues 1–25 (MSKRGSLQDRASPSEETVKKAQKRR). Positions 31–59 (CAFCRKRKLRCDQQKPMCSTCKTRGRSGC) form a DNA-binding region, zn(2)-C6 fungal-type. Positions 721 to 747 (PLAGNSPGLPPEEVRNNSENASHNNET) are disordered. Residues 737-747 (NSENASHNNET) are compositionally biased toward polar residues.

The protein localises to the cytoplasm. It is found in the nucleus. Transcription factor involved in the regulation of multidrug resistance genes. Acts in concert with YRR1. The polypeptide is Zinc finger transcription factor YRM1 (YRM1) (Saccharomyces cerevisiae (strain ATCC 204508 / S288c) (Baker's yeast)).